Here is a 401-residue protein sequence, read N- to C-terminus: Propionate kinase (401 aa).

2 residues coordinate ATP: N11 and K18. N11 contributes to the Mg(2+) binding site. Residue R86 participates in substrate binding. D143 acts as the Proton donor/acceptor in catalysis. Residues H175, 203-207 (HLGNG), 278-280 (DLR), and 326-330 (GIGEN) each bind ATP.

This sequence belongs to the acetokinase family. TdcD subfamily. As to quaternary structure, homodimer. Mg(2+) is required as a cofactor.

The catalysed reaction is propanoate + ATP = propanoyl phosphate + ADP. Its pathway is amino-acid degradation; L-threonine degradation via propanoate pathway; propanoate from L-threonine: step 4/4. Functionally, catalyzes the conversion of propionyl phosphate and ADP to propionate and ATP. The protein is Propionate kinase of Klebsiella pneumoniae (strain 342).